An 89-amino-acid chain; its full sequence is Small ribosomal subunit protein uS15 (89 aa).

Belongs to the universal ribosomal protein uS15 family. In terms of assembly, part of the 30S ribosomal subunit. Forms a bridge to the 50S subunit in the 70S ribosome, contacting the 23S rRNA.

In terms of biological role, one of the primary rRNA binding proteins, it binds directly to 16S rRNA where it helps nucleate assembly of the platform of the 30S subunit by binding and bridging several RNA helices of the 16S rRNA. Forms an intersubunit bridge (bridge B4) with the 23S rRNA of the 50S subunit in the ribosome. The protein is Small ribosomal subunit protein uS15 of Bartonella henselae (strain ATCC 49882 / DSM 28221 / CCUG 30454 / Houston 1) (Rochalimaea henselae).